The sequence spans 368 residues: 3-dehydroquinate synthase (368 aa).

NAD(+)-binding positions include 71–76 (DGEAFK), 105–109 (GVVGD), 129–130 (TT), Lys-142, Lys-151, and 169–172 (TLRT). Zn(2+) contacts are provided by Glu-184, His-247, and His-264.

The protein belongs to the sugar phosphate cyclases superfamily. Dehydroquinate synthase family. It depends on Co(2+) as a cofactor. Zn(2+) serves as cofactor. NAD(+) is required as a cofactor.

It is found in the cytoplasm. It catalyses the reaction 7-phospho-2-dehydro-3-deoxy-D-arabino-heptonate = 3-dehydroquinate + phosphate. It functions in the pathway metabolic intermediate biosynthesis; chorismate biosynthesis; chorismate from D-erythrose 4-phosphate and phosphoenolpyruvate: step 2/7. Functionally, catalyzes the conversion of 3-deoxy-D-arabino-heptulosonate 7-phosphate (DAHP) to dehydroquinate (DHQ). The protein is 3-dehydroquinate synthase of Cupriavidus pinatubonensis (strain JMP 134 / LMG 1197) (Cupriavidus necator (strain JMP 134)).